The following is a 918-amino-acid chain: Importin subunit beta-2 (918 aa).

HEAT repeat units follow at residues 11 to 38 (YVLQLATLLQNCMSPNPEIRNNAMEAME), 43 to 92 (QPEF…GGNN), 103 to 137 (YVKSNIIHGLYNSNNNLVSNVTGIVITTLFSTYYR), 145 to 181 (GLQMLYQLLELTSNGNEPSIKALSKIMEDSAQFFQLE), 190 to 222 (EALLDSFFRFISNPNFSPVIRSESVKCINTVIP), 235 to 263 (FLEIIFQLAQNDENDLVRAQICISFSFLL), 275 to 303 (DGIVQFMLHLITTVNEEKVAIEACEFLHA), 320 to 413 (KDIV…MTNI), 421 to 449 (IAFPFLREHLGSDRWFIREATILALGAMA), 461 to 488 (PALIPFLVEQLNDKWAPVRKMTCWTLSR), 501 to 534 (LIPVLEPIINTLMDKKKDVQEAAISSVAVFIENA), 542 to 577 (LFYSQLLTSFDKCLKYYKKKNLIILYDAIGRFAEKC), 583 to 620 (AMQIILPPLIEKWALLSDSDKELWPLLECLSCVASSLG), 628 to 678 (PEVY…GLGA), 694 to 725 (ILKIMLECLQDPVHEVRQSCFALLGDIVYFFN), 777 to 814 (IDMSRIILDLFTTNTQIVDSSVMENLSVTIGKMGLTHP), 825 to 858 (DSNWNKWCLSVNALDDVEEKSSAYMGFLKIINLT), and 867 to 900 (DTIHKIVTGLSSNVEANVFAQEIYTFLMNHSAQI). Positions 361 to 395 (APRIVKKKEAGNGEDADDNEDDDDDDDDEDGDVDT) are disordered. The span at 372–393 (NGEDADDNEDDDDDDDDEDGDV) shows a compositional bias: acidic residues.

The protein belongs to the importin beta family. Importin beta-2 subfamily. Interacts with Ran (GSP1); interacts specifically with the GTP-bound form of Ran (GTP-Ran), protecting it from GTP hydrolysis and nucleotide exchange. Interacts with nucleoporins NUP1, NUP100 and NUP116. Interacts with NAB2 and HRP1/NAB4; via their rg-NLS. Interacts with TFG2; via its PY-NLS.

It is found in the cytoplasm. Its subcellular location is the nucleus. It localises to the nuclear pore complex. In terms of biological role, functions in nuclear protein import as nuclear transport receptor. Serves as receptor for arginine/glycine-rich nuclear localization signals (rg-NLS) and PY-NLS in cargo substrates. Its predominant cargo substrate seems to be mRNA-binding proteins. Required for nuclear transport of NAB2, HRP1/NAB4 and TFG2. Mediates docking of the importin/substrate complex to the nuclear pore complex (NPC) through binding to repeat-containing nucleoporins. The complex is subsequently translocated through the pore by an energy requiring, Ran-dependent mechanism. At the nucleoplasmic side of the NPC, GTP-Ran binding leads to release of the cargo. Efficient GTP-Ran-mediated substrate release requires RNA. The importin is re-exported from the nucleus to the cytoplasm where GTP hydrolysis releases Ran from importin. The directionality of nuclear import is thought to be conferred by an asymmetric distribution of the GTP- and GDP-bound forms of Ran between the cytoplasm and nucleus. This is Importin subunit beta-2 from Saccharomyces cerevisiae (strain ATCC 204508 / S288c) (Baker's yeast).